The primary structure comprises 346 residues: MIKISIDAMGGDFGPEVVIPGAAKAFERHPDIRFIFFGLPAQVEPVLARYPKLKEASEFRASEVAIGMDDKPSQALRAGRGKSSMWQAIEAVKTGDADACVSAGNTGALMAMSKFCLRMMSDVERPAIAGIWPTLRGESIVLDIGATIGADARQLVDYAVMGAGIARALFEVRKPTVGLLNVGTEEVKGLDEIKEAGQILRDTPLDGLEYSGFVEGNDIGKGTVDVVVTEGFTGNIALKTAEGTARQMAELLRQAMSRTLLAKIGYVFAKGAFDRLREKMDPNKVNGGVFLGLSGIVIKSHGGANAEGFCSAVEVGYDMVRNRLLEKIEADLAHFHHSHSHVSSKA.

It belongs to the PlsX family. Homodimer. Probably interacts with PlsY.

It is found in the cytoplasm. The enzyme catalyses a fatty acyl-[ACP] + phosphate = an acyl phosphate + holo-[ACP]. It functions in the pathway lipid metabolism; phospholipid metabolism. Catalyzes the reversible formation of acyl-phosphate (acyl-PO(4)) from acyl-[acyl-carrier-protein] (acyl-ACP). This enzyme utilizes acyl-ACP as fatty acyl donor, but not acyl-CoA. In Brucella suis biovar 1 (strain 1330), this protein is Phosphate acyltransferase.